Consider the following 167-residue polypeptide: Translationally-controlled tumor protein homolog (167 aa).

The TCTP domain occupies 1-167 (MKLFTDIISN…WKDGLRETKI (167 aa)).

This sequence belongs to the TCTP family.

It localises to the cytoplasm. The protein localises to the cytoskeleton. In terms of biological role, involved in protein synthesis. Involved in microtubule stabilization. The polypeptide is Translationally-controlled tumor protein homolog (Mycosarcoma maydis (Corn smut fungus)).